The sequence spans 795 residues: Phenylalanine--tRNA ligase beta subunit (795 aa).

The region spanning 39–149 (SGEFSGVVVA…ADAPIGVDIR (111 aa)) is the tRNA-binding domain. The B5 domain occupies 402 to 477 (PKQPIIRLRR…RIYGYNRIPN (76 aa)). Residues Asp455, Asp461, Glu464, and Glu465 each contribute to the Mg(2+) site. The region spanning 701 to 794 (SKFPANNRDI…LAQRFQASLR (94 aa)) is the FDX-ACB domain.

It belongs to the phenylalanyl-tRNA synthetase beta subunit family. Type 1 subfamily. Tetramer of two alpha and two beta subunits. Mg(2+) is required as a cofactor.

The protein localises to the cytoplasm. The catalysed reaction is tRNA(Phe) + L-phenylalanine + ATP = L-phenylalanyl-tRNA(Phe) + AMP + diphosphate + H(+). This Haemophilus ducreyi (strain 35000HP / ATCC 700724) protein is Phenylalanine--tRNA ligase beta subunit.